A 254-amino-acid polypeptide reads, in one-letter code: MIRFDCITLFPEMFAAVTESGITRRALEEQRWQWQGWNPRDFAENAWRRVDDRPFGGGPGMVMQPGPLEKAIAAAKSQQREAGLAKSRVIYLSPQGAPLTHERVMQLATGDEGLILLCGRYEGIDERLIERCVDEEISIGDFVLSGGELPAMVLIDAVVRQLPGVLGDAASAVEDSFVGGLLDCPHYTRPEVYEGVSVPETLMSGDHKRIRRWRLKQSLARTRKRRPDLLAHRVLSAEETQLLTEISGEEQCGE.

Residues glycine 119 and 139–144 (IGDFVL) contribute to the S-adenosyl-L-methionine site.

The protein belongs to the RNA methyltransferase TrmD family. Homodimer.

The protein resides in the cytoplasm. The enzyme catalyses guanosine(37) in tRNA + S-adenosyl-L-methionine = N(1)-methylguanosine(37) in tRNA + S-adenosyl-L-homocysteine + H(+). Its function is as follows. Specifically methylates guanosine-37 in various tRNAs. The sequence is that of tRNA (guanine-N(1)-)-methyltransferase from Dechloromonas aromatica (strain RCB).